We begin with the raw amino-acid sequence, 484 residues long: Coronin-1B (484 aa).

Phosphoserine is present on Ser2. 5 WD repeats span residues 80 to 120 (GHTG…LTSP), 130 to 170 (GHTK…ELYR), 174 to 213 (LHPDLIYNVSWNHNGSLFCTACKDKSVRIIDPRRGTLVAE), 217 to 260 (AHEG…EPMA), and 265 to 305 (DSSN…PYIH). The stretch at 447–481 (KLEEVMHGLRALRVLVKEQGERISRLEEHLGRMEN) forms a coiled coil.

The protein belongs to the WD repeat coronin family. In terms of assembly, forms homooligomers, but does not form complexes with the other coronins. Interacts with Arp2/3 complex components, including ACTR2, ARPC1B and ARPC2. Binds actin. Post-translationally, phosphorylation on Ser-2 regulates the interaction with the Arp2/3 complex and cell motility in fibroblasts. Phosphorylation does not seem to affect subcellular location.

The protein resides in the cytoplasm. It localises to the cytoskeleton. The protein localises to the stress fiber. In terms of biological role, regulates leading edge dynamics and cell motility in fibroblasts. May be involved in cytokinesis and signal transduction. The protein is Coronin-1B (Coro1b) of Rattus norvegicus (Rat).